We begin with the raw amino-acid sequence, 86 residues long: uncharacterized protein (86 aa).

Residues 63–85 (VGGRSPSIQNSFFFFFFFFFFFF) traverse the membrane as a helical segment.

Its subcellular location is the membrane. This is an uncharacterized protein from Dictyostelium discoideum (Social amoeba).